The chain runs to 872 residues: Valine--tRNA ligase (872 aa).

Residues 46-56 (PNVTGKLHIGH) carry the 'HIGH' region motif. The 'KMSKS' region motif lies at 523–527 (KMSKS). Lys526 lines the ATP pocket. Residues 796 to 872 (IEIANDSFIN…KDKLKELTND (77 aa)) are a coiled coil.

Belongs to the class-I aminoacyl-tRNA synthetase family. ValS type 1 subfamily. In terms of assembly, monomer.

It is found in the cytoplasm. The enzyme catalyses tRNA(Val) + L-valine + ATP = L-valyl-tRNA(Val) + AMP + diphosphate. Catalyzes the attachment of valine to tRNA(Val). As ValRS can inadvertently accommodate and process structurally similar amino acids such as threonine, to avoid such errors, it has a 'posttransfer' editing activity that hydrolyzes mischarged Thr-tRNA(Val) in a tRNA-dependent manner. This is Valine--tRNA ligase from Mycoplasma mycoides subsp. mycoides SC (strain CCUG 32753 / NCTC 10114 / PG1).